A 201-amino-acid polypeptide reads, in one-letter code: Recombination protein RecR (201 aa).

The C4-type zinc finger occupies 57–72; it reads CRYCRNLSDAEVCLLC. Positions 80–175 constitute a Toprim domain; the sequence is QQICVVETPA…QATRLAYGVP (96 aa).

Belongs to the RecR family.

In terms of biological role, may play a role in DNA repair. It seems to be involved in an RecBC-independent recombinational process of DNA repair. It may act with RecF and RecO. This chain is Recombination protein RecR, found in Dichelobacter nodosus (strain VCS1703A).